A 107-amino-acid chain; its full sequence is Thioredoxin (107 aa).

One can recognise a Thioredoxin domain in the interval 2-107 (SVSQVTDASF…LASTLNKYIS (106 aa)). Catalysis depends on nucleophile residues Cys-31 and Cys-34. Cys-31 and Cys-34 are joined by a disulfide.

It belongs to the thioredoxin family.

It localises to the plastid. The protein resides in the chloroplast. Functionally, participates in various redox reactions through the reversible oxidation of its active center dithiol to a disulfide and catalyzes dithiol-disulfide exchange reactions. This chain is Thioredoxin (trxA), found in Pyropia yezoensis (Susabi-nori).